We begin with the raw amino-acid sequence, 240 residues long: Biosynthetic peptidoglycan transglycosylase (240 aa).

Residues 16–36 (VLMALLCLFLIYELAMFSMVV) form a helical membrane-spanning segment.

The protein belongs to the glycosyltransferase 51 family.

The protein localises to the cell inner membrane. It catalyses the reaction [GlcNAc-(1-&gt;4)-Mur2Ac(oyl-L-Ala-gamma-D-Glu-L-Lys-D-Ala-D-Ala)](n)-di-trans,octa-cis-undecaprenyl diphosphate + beta-D-GlcNAc-(1-&gt;4)-Mur2Ac(oyl-L-Ala-gamma-D-Glu-L-Lys-D-Ala-D-Ala)-di-trans,octa-cis-undecaprenyl diphosphate = [GlcNAc-(1-&gt;4)-Mur2Ac(oyl-L-Ala-gamma-D-Glu-L-Lys-D-Ala-D-Ala)](n+1)-di-trans,octa-cis-undecaprenyl diphosphate + di-trans,octa-cis-undecaprenyl diphosphate + H(+). It participates in cell wall biogenesis; peptidoglycan biosynthesis. Peptidoglycan polymerase that catalyzes glycan chain elongation from lipid-linked precursors. In Bordetella avium (strain 197N), this protein is Biosynthetic peptidoglycan transglycosylase.